The following is a 283-amino-acid chain: Bifunctional protein FolD (283 aa).

Residues 159 to 161 (GRS), Ser184, and Ile225 each bind NADP(+).

Belongs to the tetrahydrofolate dehydrogenase/cyclohydrolase family. As to quaternary structure, homodimer.

It catalyses the reaction (6R)-5,10-methylene-5,6,7,8-tetrahydrofolate + NADP(+) = (6R)-5,10-methenyltetrahydrofolate + NADPH. The catalysed reaction is (6R)-5,10-methenyltetrahydrofolate + H2O = (6R)-10-formyltetrahydrofolate + H(+). It participates in one-carbon metabolism; tetrahydrofolate interconversion. In terms of biological role, catalyzes the oxidation of 5,10-methylenetetrahydrofolate to 5,10-methenyltetrahydrofolate and then the hydrolysis of 5,10-methenyltetrahydrofolate to 10-formyltetrahydrofolate. The chain is Bifunctional protein FolD from Methanoculleus marisnigri (strain ATCC 35101 / DSM 1498 / JR1).